Reading from the N-terminus, the 152-residue chain is Probable histone H2A.3 (152 aa).

Disordered stretches follow at residues 1-25 (MDASTKTTKKGAGGRKGGGPRKKSV) and 129-152 (KTERANTGGKEPKTTKAGKSPKKA). Over residues 7–25 (TTKKGAGGRKGGGPRKKSV) the composition is skewed to basic residues. Residues 129-142 (KTERANTGGKEPKT) show a composition bias toward basic and acidic residues. The short motif at 148–151 (SPKK) is the SPKK motif element.

The protein belongs to the histone H2A family. In terms of assembly, the nucleosome is a histone octamer containing two molecules each of H2A, H2B, H3 and H4 assembled in one H3-H4 heterotetramer and two H2A-H2B heterodimers. The octamer wraps approximately 147 bp of DNA.

Its subcellular location is the nucleus. It is found in the chromosome. Its function is as follows. Core component of nucleosome. Nucleosomes wrap and compact DNA into chromatin, limiting DNA accessibility to the cellular machineries which require DNA as a template. Histones thereby play a central role in transcription regulation, DNA repair, DNA replication and chromosomal stability. DNA accessibility is regulated via a complex set of post-translational modifications of histones, also called histone code, and nucleosome remodeling. This Medicago truncatula (Barrel medic) protein is Probable histone H2A.3.